Here is a 115-residue protein sequence, read N- to C-terminus: Large ribosomal subunit protein bL19 (115 aa).

The protein belongs to the bacterial ribosomal protein bL19 family. In terms of assembly, part of the 50S ribosomal subunit.

In terms of biological role, this protein is located at the 30S-50S ribosomal subunit interface and may play a role in the structure and function of the aminoacyl-tRNA binding site. This is Large ribosomal subunit protein bL19 (rplS) from Bacillus subtilis (strain 168).